A 440-amino-acid polypeptide reads, in one-letter code: Protein naked cuticle homolog 1 (440 aa).

Gly-2 carries the N-myristoyl glycine lipid modification. The EF-hand domain maps to 129-164 (EEDNRQEWTFTLYDFDNNGKVTREDITSLLHTIYEV). Residues Asp-142, Asp-144, Asn-146, Lys-148, and Asp-153 each coordinate Ca(2+). Over residues 192-204 (RWKNCTQTNTDTP) the composition is skewed to polar residues. Disordered regions lie at residues 192–221 (RWKNCTQTNTDTPNPKHKGEKCIEDSKTSE), 272–379 (AAPA…QRPK), and 421–440 (RHEHHHHHEHHHHYHHFYQS). Residues 211–221 (EKCIEDSKTSE) show a composition bias toward basic and acidic residues. A compositionally biased stretch (low complexity) spans 272 to 293 (AAPATEPAKPTHATRSSNQSRS). The span at 324-336 (RHTHALRSPKTHR) shows a compositional bias: basic residues. A compositionally biased stretch (pro residues) spans 352-362 (APPPPSVPNQT). The segment covering 422-440 (HEHHHHHEHHHHYHHFYQS) has biased composition (basic residues).

Belongs to the NKD family.

The protein resides in the cell membrane. It is found in the cytoplasm. Functionally, cell autonomous antagonist of the canonical Wnt signaling pathway. May activate a second Wnt signaling pathway that controls planar cell polarity. This Danio rerio (Zebrafish) protein is Protein naked cuticle homolog 1 (nkd1).